A 307-amino-acid chain; its full sequence is UDP-N-acetylenolpyruvoylglucosamine reductase (307 aa).

An FAD-binding PCMH-type domain is found at 21–183; it reads RVGGPADLFF…TEVVMEGPPG (163 aa). Residue Arg-163 is part of the active site. Residues 200-209 show a composition bias toward basic and acidic residues; that stretch reads EATQPTKDRT. A disordered region spans residues 200 to 227; it reads EATQPTKDRTAGSTFRNPAGFSSTGRAD. Residues 210–224 show a composition bias toward polar residues; it reads AGSTFRNPAGFSSTG. Catalysis depends on Ser-212, which acts as the Proton donor. The active site involves Glu-294.

Belongs to the MurB family. FAD serves as cofactor.

It localises to the cytoplasm. It carries out the reaction UDP-N-acetyl-alpha-D-muramate + NADP(+) = UDP-N-acetyl-3-O-(1-carboxyvinyl)-alpha-D-glucosamine + NADPH + H(+). It functions in the pathway cell wall biogenesis; peptidoglycan biosynthesis. Functionally, cell wall formation. The chain is UDP-N-acetylenolpyruvoylglucosamine reductase from Dinoroseobacter shibae (strain DSM 16493 / NCIMB 14021 / DFL 12).